Here is a 205-residue protein sequence, read N- to C-terminus: MSGGDIDPTAINSPKFRLIAVQCLFALTAFATMAGQNKNLAGPDAMTLEECGPYGCGYHKFAVFQFLVVICVTYWLFTMLWMGMYLIQKVPPAGTEFMIYAVFNVLILIAFSTSWTECNETIVDPTYPVCKRATGAKASIAFAMFTWLALCVSMMFTWKEWRDQNYEGLPIFGDFSSFMPGGGGGGMGGGGGYERPSDVNTQTYA.

Residues 1 to 66 (MSGGDIDPTA…GYHKFAVFQF (66 aa)) lie on the Cytoplasmic side of the membrane. Positions 10-162 (AINSPKFRLI…SMMFTWKEWR (153 aa)) constitute an MARVEL domain. The helical transmembrane segment at 67–87 (LVVICVTYWLFTMLWMGMYLI) threads the bilayer. The Extracellular portion of the chain corresponds to 88–90 (QKV). The chain crosses the membrane as a helical span at residues 91–111 (PPAGTEFMIYAVFNVLILIAF). Residues 112–137 (STSWTECNETIVDPTYPVCKRATGAK) lie on the Cytoplasmic side of the membrane. The chain crosses the membrane as a helical span at residues 138 to 158 (ASIAFAMFTWLALCVSMMFTW). At 159–167 (KEWRDQNYE) the chain is on the extracellular side. The helical transmembrane segment at 168–188 (GLPIFGDFSSFMPGGGGGGMG) threads the bilayer. At 189–205 (GGGGYERPSDVNTQTYA) the chain is on the cytoplasmic side.

This sequence belongs to the Casparian strip membrane proteins (CASP) family. In terms of assembly, homodimer and heterodimers.

The protein localises to the cell membrane. The polypeptide is CASP-like protein 0U1 (Micromonas pusilla (strain CCMP1545) (Picoplanktonic green alga)).